A 523-amino-acid polypeptide reads, in one-letter code: Cytokinin dehydrogenase 3 (523 aa).

A signal peptide spans 1 to 31 (MASYNLRSQVRLIAITIVIIITLSTPITTNT). One can recognise an FAD-binding PCMH-type domain in the interval 66–243 (TKIFPSAVLI…TRARIKLEVA (178 aa)). Residues Ala100, Gly102, and Gly104 each coordinate FAD. His105 is modified (pros-8alpha-FAD histidine). Residues Ser106 and Gln110 each coordinate FAD. An N-linked (GlcNAc...) asparagine glycan is attached at Asn153. The FAD site is built by Asp167, Thr172, Ser178, Ile182, and Ile233. Asn408 is a glycosylation site (N-linked (GlcNAc...) asparagine). The FAD site is built by Tyr476, Ser511, and Gln514.

The protein belongs to the oxygen-dependent FAD-linked oxidoreductase family. FAD is required as a cofactor. Very weak expression in the young shoot tissues around two weeks after germination. Present in the center of the floral meristem and the boundary between long stamen primordia and gynoecial primordia.

The protein localises to the endoplasmic reticulum. The protein resides in the vacuole. It catalyses the reaction N(6)-dimethylallyladenine + A + H2O = 3-methyl-2-butenal + adenine + AH2. Catalyzes the oxidation of cytokinins, a family of N(6)-substituted adenine derivatives that are plant hormones, where the substituent is an isopentenyl group. Catalyzes in vitro the oxidation of various types of cytokinin nucleotides that are known as direct products of cytokinin biosynthesis. In association with CKX5 regulates the activity of the reproductive meristems, flower organ size and ovule formation. The polypeptide is Cytokinin dehydrogenase 3 (CKX3) (Arabidopsis thaliana (Mouse-ear cress)).